The following is a 254-amino-acid chain: Glucosamine-6-phosphate deaminase (254 aa).

Catalysis depends on Asp63, which acts as the Proton acceptor; for enolization step. Asn129 serves as the catalytic For ring-opening step. The active-site Proton acceptor; for ring-opening step is His131. Residue Glu136 is the For ring-opening step of the active site.

The protein belongs to the glucosamine/galactosamine-6-phosphate isomerase family. NagB subfamily.

It catalyses the reaction alpha-D-glucosamine 6-phosphate + H2O = beta-D-fructose 6-phosphate + NH4(+). It participates in amino-sugar metabolism; N-acetylneuraminate degradation; D-fructose 6-phosphate from N-acetylneuraminate: step 5/5. Functionally, catalyzes the reversible isomerization-deamination of glucosamine 6-phosphate (GlcN6P) to form fructose 6-phosphate (Fru6P) and ammonium ion. This is Glucosamine-6-phosphate deaminase from Exiguobacterium sp. (strain ATCC BAA-1283 / AT1b).